The chain runs to 378 residues: Carbazole 1,9a-dioxygenase, terminal oxygenase component CarAa (378 aa).

Residues 29–135 form the Rieske domain; the sequence is WYPVRLASEI…VEEAKGLIFV (107 aa). [2Fe-2S] cluster-binding residues include cysteine 69, histidine 71, cysteine 90, and histidine 93.

In terms of assembly, homotrimer. Carbazole 1,9a-dioxygenase complex consists of a terminal oxygenase component CarAa, a ferredoxin reductase component fdr and a ferredoxin component CarAc. Requires [2Fe-2S] cluster as cofactor.

The catalysed reaction is 9H-carbazole + NADH + O2 + H(+) = 2'-aminobiphenyl-2,3-diol + NAD(+). It catalyses the reaction 9H-carbazole + NADPH + O2 + H(+) = 2'-aminobiphenyl-2,3-diol + NADP(+). Part of the multicomponent carbazole 1,9a-dioxygenase (CARDO), that converts carbazole (CAR) into 2-aminobiphenyl-2,3-diol. Catalyzes the dioxygenation at the angular (C-9a) and adjacent (C-1) positions of carbazole to yield a highly unstable cis-hydrodiol intermediate which is spontaneously converted to 2-aminobiphenyl-2,3-diol. In Sphingomonas sp, this protein is Carbazole 1,9a-dioxygenase, terminal oxygenase component CarAa (carAa).